The following is a 50-amino-acid chain: Large ribosomal subunit protein bL33 (50 aa).

The protein belongs to the bacterial ribosomal protein bL33 family.

The chain is Large ribosomal subunit protein bL33 from Koribacter versatilis (strain Ellin345).